The following is a 50-amino-acid chain: uncharacterized protein (50 aa).

This is an uncharacterized protein from Saccharomyces cerevisiae (strain ATCC 204508 / S288c) (Baker's yeast).